The sequence spans 180 residues: Beta-lactoglobulin-1/B (180 aa).

The signal sequence occupies residues 1-18; that stretch reads MKCLLLALGLALACGVQA. 3 disulfide bridges follow: Cys-84-Cys-178, Cys-124-Cys-137, and Cys-124-Cys-139.

The protein belongs to the calycin superfamily. Lipocalin family. Under physiological conditions beta-lactoglobulin exists as an equilibrium mixture of monomeric and dimeric forms. Alternate disulfide bonds occur in equal amounts.

It is found in the secreted. Lactoglobulin is the primary component of whey, it binds retinol and is probably involved in the transport of that molecule. The polypeptide is Beta-lactoglobulin-1/B (Ovis aries (Sheep)).